A 124-amino-acid polypeptide reads, in one-letter code: Fluoride-specific ion channel FluC (124 aa).

The next 3 membrane-spanning stretches (helical) occupy residues 36–56, 63–83, and 99–119; these read VGTMIVNVVGSFLMGVLVVVL, YAPFLMTGMLGGFTTFSAFSL, and AYVGLSVGLSLAGLMAGMAAV. Na(+) contacts are provided by glycine 73 and threonine 76.

The protein belongs to the fluoride channel Fluc/FEX (TC 1.A.43) family.

The protein localises to the cell inner membrane. It carries out the reaction fluoride(in) = fluoride(out). Its activity is regulated as follows. Na(+) is not transported, but it plays an essential structural role and its presence is essential for fluoride channel function. Its function is as follows. Fluoride-specific ion channel. Important for reducing fluoride concentration in the cell, thus reducing its toxicity. The chain is Fluoride-specific ion channel FluC from Cereibacter sphaeroides (strain ATCC 17029 / ATH 2.4.9) (Rhodobacter sphaeroides).